A 294-amino-acid chain; its full sequence is ATP synthase gamma chain (294 aa).

This sequence belongs to the ATPase gamma chain family. As to quaternary structure, F-type ATPases have 2 components, CF(1) - the catalytic core - and CF(0) - the membrane proton channel. CF(1) has five subunits: alpha(3), beta(3), gamma(1), delta(1), epsilon(1). CF(0) has three main subunits: a, b and c.

It is found in the cell inner membrane. Functionally, produces ATP from ADP in the presence of a proton gradient across the membrane. The gamma chain is believed to be important in regulating ATPase activity and the flow of protons through the CF(0) complex. This Campylobacter jejuni subsp. jejuni serotype O:6 (strain 81116 / NCTC 11828) protein is ATP synthase gamma chain.